Reading from the N-terminus, the 552-residue chain is MPSGRLQQQFIRLWQCCDGKTQDTTLNELADLLNCSRRHMRTLLNTMQARGWLTWEAEVGRGKRSRLTFLYTGLALQQQRAEDLLEQDRIDQLVQLVGDKSAVRQMLISHLGRSFRQGRHILRVLYYRPMHNLLPGTALRRSETHIARQIFSSLTRVNEENGELEADIAHHWQQISPLLWRFYLRPGIHFHHGRELEMEDVIASLTRINTLPLYSHITKIDSPTAWTLDIHLSQPDRWLPWLLGQVPAMILSREWETLANFASHPIGTGPYAVRRNTPNQLKILAFDDYFGYRALIDEVNVWVLPDISEEPACGLMLEGPIQGGEKAIESRLEKGCYYLLFDARTPRGAHPQVREWVSHVLSPTNLLYHADEPLQQLWFPAYGLLPRWHHARPGPGEKPAGLETLTLTFYREHIEHRVIARIMSALLAEHQVHLHIQEIDYDQWHAGEIESDIWLNSANFTLPLDFSLFAHLCEVPLLQNCIPRDWQDDAAQWRAGEMNLANWCQQLLANKAIVPLIHHWLIIQGQRSMRGLRMNTLGWFDFKSAWFAPPDP.

The HTH marR-type domain maps to 1–116 (MPSGRLQQQF…LISHLGRSFR (116 aa)). Residues 26 to 49 (LNELADLLNCSRRHMRTLLNTMQA) constitute a DNA-binding region (H-T-H motif). Positions 163–493 (ELEADIAHHW…RDWQDDAAQW (331 aa)) are solute-binding.

Functionally, activates the small RNA gene sgrS under glucose-phosphate stress conditions as well as yfdZ. Represses its own transcription under both stress and non-stress conditions. Might act as a sensor of the intracellular accumulation of phosphoglucose by binding these molecules in its C-terminal solute-binding domain. The polypeptide is HTH-type transcriptional regulator SgrR (Salmonella choleraesuis (strain SC-B67)).